The sequence spans 176 residues: Large ribosomal subunit protein uL6 (176 aa).

This sequence belongs to the universal ribosomal protein uL6 family. Part of the 50S ribosomal subunit.

In terms of biological role, this protein binds to the 23S rRNA, and is important in its secondary structure. It is located near the subunit interface in the base of the L7/L12 stalk, and near the tRNA binding site of the peptidyltransferase center. In Dechloromonas aromatica (strain RCB), this protein is Large ribosomal subunit protein uL6.